Here is a 481-residue protein sequence, read N- to C-terminus: Protein nucleotidyltransferase YdiU (481 aa).

Glycine 85, glycine 87, arginine 88, lysine 108, aspartate 120, glycine 121, arginine 172, and arginine 179 together coordinate ATP. Aspartate 248 functions as the Proton acceptor in the catalytic mechanism. 2 residues coordinate Mg(2+): asparagine 249 and aspartate 258. Aspartate 258 provides a ligand contact to ATP.

This sequence belongs to the SELO family. The cofactor is Mg(2+). Mn(2+) serves as cofactor.

It carries out the reaction L-seryl-[protein] + ATP = 3-O-(5'-adenylyl)-L-seryl-[protein] + diphosphate. The catalysed reaction is L-threonyl-[protein] + ATP = 3-O-(5'-adenylyl)-L-threonyl-[protein] + diphosphate. It catalyses the reaction L-tyrosyl-[protein] + ATP = O-(5'-adenylyl)-L-tyrosyl-[protein] + diphosphate. The enzyme catalyses L-histidyl-[protein] + UTP = N(tele)-(5'-uridylyl)-L-histidyl-[protein] + diphosphate. It carries out the reaction L-seryl-[protein] + UTP = O-(5'-uridylyl)-L-seryl-[protein] + diphosphate. The catalysed reaction is L-tyrosyl-[protein] + UTP = O-(5'-uridylyl)-L-tyrosyl-[protein] + diphosphate. In terms of biological role, nucleotidyltransferase involved in the post-translational modification of proteins. It can catalyze the addition of adenosine monophosphate (AMP) or uridine monophosphate (UMP) to a protein, resulting in modifications known as AMPylation and UMPylation. This is Protein nucleotidyltransferase YdiU from Cereibacter sphaeroides (strain ATCC 17025 / ATH 2.4.3) (Rhodobacter sphaeroides).